A 273-amino-acid polypeptide reads, in one-letter code: 5-deoxy-glucuronate isomerase (273 aa).

This sequence belongs to the isomerase IolB family.

The enzyme catalyses 5-deoxy-D-glucuronate = 5-dehydro-2-deoxy-D-gluconate. It participates in polyol metabolism; myo-inositol degradation into acetyl-CoA; acetyl-CoA from myo-inositol: step 4/7. Functionally, involved in the isomerization of 5-deoxy-glucuronate (5DG) to 5-dehydro-2-deoxy-D-gluconate (DKG or 2-deoxy-5-keto-D-gluconate). The polypeptide is 5-deoxy-glucuronate isomerase (Listeria monocytogenes serotype 4b (strain CLIP80459)).